Consider the following 611-residue polypeptide: Sensor histidine kinase WalK (611 aa).

At 1-13 (MNKVGFFRSIQFK) the chain is on the cytoplasmic side. A helical transmembrane segment spans residues 14–34 (ITLIYVLLIIIAMQIIGVYFV). Over 35-182 (NQVEKSLISS…VFNQMKTINT (148 aa)) the chain is Extracellular. Residues 183–203 (ILASGTGLALVLTALLGIFLA) form a helical membrane-spanning segment. An HAMP domain is found at 204-256 (RTITHPLSDMRKQAMELAKGNFSRKVKKYGHDEIGQLATTFNHLTRELEDAQA). At 204–611 (RTITHPLSDM…EEQEDDWDEA (408 aa)) the chain is on the cytoplasmic side. Residues 263–324 (RKLASVIAYM…QENYTFEDLV (62 aa)) form the PAS domain. The PAC domain occupies 325–379 (EQQDSMLLEIERDDELTVLRVNFSVIQREHGKIDGLIAVIYDVTEQEKMDQERRE). A Histidine kinase domain is found at 383–602 (NVSHELRTPL…TITFTLPYKE (220 aa)). His386 carries the phosphohistidine; by autocatalysis modification.

Homodimer. Interacts with YycH and YycI. Post-translationally, autophosphorylated.

The protein resides in the cell membrane. The enzyme catalyses ATP + protein L-histidine = ADP + protein N-phospho-L-histidine.. Member of the two-component regulatory system WalK/WalR involved in the regulation of the ftsAZ operon, the yocH and ykvT, cwlO, lytE, ydjM, yjeA, yoeB genes and the tagAB and tagDEF operons. Phosphorylates WalR. In Bacillus subtilis (strain 168), this protein is Sensor histidine kinase WalK.